Reading from the N-terminus, the 435-residue chain is ATP-dependent protease ATPase subunit HslU (435 aa).

ATP is bound by residues Ile-18, 60 to 65 (GVGKTE), Asp-248, Glu-313, and Arg-385.

Belongs to the ClpX chaperone family. HslU subfamily. A double ring-shaped homohexamer of HslV is capped on each side by a ring-shaped HslU homohexamer. The assembly of the HslU/HslV complex is dependent on binding of ATP.

It localises to the cytoplasm. In terms of biological role, ATPase subunit of a proteasome-like degradation complex; this subunit has chaperone activity. The binding of ATP and its subsequent hydrolysis by HslU are essential for unfolding of protein substrates subsequently hydrolyzed by HslV. HslU recognizes the N-terminal part of its protein substrates and unfolds these before they are guided to HslV for hydrolysis. This chain is ATP-dependent protease ATPase subunit HslU, found in Allorhizobium ampelinum (strain ATCC BAA-846 / DSM 112012 / S4) (Agrobacterium vitis (strain S4)).